An 889-amino-acid polypeptide reads, in one-letter code: Alanine--tRNA ligase (889 aa).

H574, H578, C682, and H686 together coordinate Zn(2+).

It belongs to the class-II aminoacyl-tRNA synthetase family. Zn(2+) is required as a cofactor.

Its subcellular location is the cytoplasm. The catalysed reaction is tRNA(Ala) + L-alanine + ATP = L-alanyl-tRNA(Ala) + AMP + diphosphate. Functionally, catalyzes the attachment of alanine to tRNA(Ala) in a two-step reaction: alanine is first activated by ATP to form Ala-AMP and then transferred to the acceptor end of tRNA(Ala). Also edits incorrectly charged Ser-tRNA(Ala) and Gly-tRNA(Ala) via its editing domain. The sequence is that of Alanine--tRNA ligase from Orientia tsutsugamushi (strain Ikeda) (Rickettsia tsutsugamushi).